A 151-amino-acid chain; its full sequence is MVKAVAVLAGTDVKGTIFFSQEGDGPTTVTGSISGLKPGLHGFHVHALGDTTNGCMSTGPHFNPVGKEHGAPEDEDRHAGDLGNVTAGEDGVVNVNITDSQIPLAGPHSIIGRAVVVHADPDDLGKGGHELSKSTGNAGGRVACGIIGLQG.

The Cu cation site is built by His44, His46, and His61. Cys55 and Cys144 are oxidised to a cystine. Zn(2+) is bound by residues His61, His69, His78, and Asp81. Cu cation is bound at residue His118.

Belongs to the Cu-Zn superoxide dismutase family. Homodimer. Cu cation serves as cofactor. The cofactor is Zn(2+).

The protein localises to the cytoplasm. It carries out the reaction 2 superoxide + 2 H(+) = H2O2 + O2. Its function is as follows. Destroys radicals which are normally produced within the cells and which are toxic to biological systems. In Zea mays (Maize), this protein is Superoxide dismutase [Cu-Zn] 2 (SODCC.1).